The following is a 261-amino-acid chain: Glucosamine-6-phosphate deaminase (261 aa).

The Proton acceptor; for enolization step role is filled by aspartate 67. Residue aspartate 136 is the For ring-opening step of the active site. Catalysis depends on histidine 138, which acts as the Proton acceptor; for ring-opening step. Glutamate 143 acts as the For ring-opening step in catalysis.

Belongs to the glucosamine/galactosamine-6-phosphate isomerase family. NagB subfamily.

The enzyme catalyses alpha-D-glucosamine 6-phosphate + H2O = beta-D-fructose 6-phosphate + NH4(+). It functions in the pathway amino-sugar metabolism; N-acetylneuraminate degradation; D-fructose 6-phosphate from N-acetylneuraminate: step 5/5. In terms of biological role, catalyzes the reversible isomerization-deamination of glucosamine 6-phosphate (GlcN6P) to form fructose 6-phosphate (Fru6P) and ammonium ion. In Beutenbergia cavernae (strain ATCC BAA-8 / DSM 12333 / CCUG 43141 / JCM 11478 / NBRC 16432 / NCIMB 13614 / HKI 0122), this protein is Glucosamine-6-phosphate deaminase.